The sequence spans 400 residues: Multiphosphoryl transfer protein (400 aa).

The PTS EIIA type-2 domain maps to leucine 2–glutamate 142. Catalysis depends on histidine 62, which acts as the Tele-phosphohistidine intermediate; for EIIA activity. The residue at position 62 (histidine 62) is a Phosphohistidine; by HPr. Residues alanine 310–glycine 400 enclose the HPr domain. Residue histidine 324 is the Pros-phosphohistidine intermediate; for HPr activity of the active site. Position 324 is a phosphohistidine; by EI (histidine 324).

Its subcellular location is the cytoplasm. Its function is as follows. The phosphoenolpyruvate-dependent sugar phosphotransferase system (sugar PTS), a major carbohydrate active transport system, catalyzes the phosphorylation of incoming sugar substrates concomitantly with their translocation across the cell membrane. The enzyme II FruAB PTS system is involved in fructose transport. The chain is Multiphosphoryl transfer protein from Vibrio cholerae serotype O1 (strain ATCC 39315 / El Tor Inaba N16961).